The sequence spans 208 residues: CD209 antigen-like protein E (208 aa).

The Cytoplasmic portion of the chain corresponds to 1 to 16 (MRAPQMGSLGFLDKGH). The helical; Signal-anchor for type II membrane protein transmembrane segment at 17-37 (IPLVLQLLFLILFTGLLVAII) threads the bilayer. Residues 38–208 (IQVSKMPSSE…KIATTCLSKW (171 aa)) lie on the Extracellular side of the membrane. Disulfide bonds link cysteine 77–cysteine 88, cysteine 105–cysteine 197, and cysteine 176–cysteine 189. Residues 83–198 (FFNGNCYFFS…CEQRKFWICK (116 aa)) enclose the C-type lectin domain.

The protein localises to the membrane. Functionally, putative pathogen-recognition receptor. May mediate the endocytosis of pathogens which are subsequently degraded in lysosomal compartments. The protein is CD209 antigen-like protein E (Cd209e) of Mus musculus (Mouse).